The primary structure comprises 346 residues: Golgi-associated RAB2 interactor protein 2 (346 aa).

Residues 275–346 (TPVESEANTS…EKHVRQPKDF (72 aa)) are disordered. 2 stretches are compositionally biased toward basic and acidic residues: residues 283 to 297 (TSKEMENKTSEEKTP) and 334 to 346 (KLVEKHVRQPKDF).

This sequence belongs to the GARIN family. Interacts with CALM1.

The protein resides in the cell projection. It localises to the cilium. It is found in the flagellum. Seems to play a role in sperm motility. The chain is Golgi-associated RAB2 interactor protein 2 (GARIN2) from Macaca fascicularis (Crab-eating macaque).